The following is a 679-amino-acid chain: Glycine--tRNA ligase beta subunit (679 aa).

Belongs to the class-II aminoacyl-tRNA synthetase family. In terms of assembly, tetramer of two alpha and two beta subunits.

Its subcellular location is the cytoplasm. The catalysed reaction is tRNA(Gly) + glycine + ATP = glycyl-tRNA(Gly) + AMP + diphosphate. The sequence is that of Glycine--tRNA ligase beta subunit from Streptococcus agalactiae serotype III (strain NEM316).